We begin with the raw amino-acid sequence, 255 residues long: Hydroxyacylglutathione hydrolase (255 aa).

Residues H56, H58, D60, H61, H114, D133, and H171 each coordinate Zn(2+).

The protein belongs to the metallo-beta-lactamase superfamily. Glyoxalase II family. In terms of assembly, monomer. Zn(2+) is required as a cofactor.

It catalyses the reaction an S-(2-hydroxyacyl)glutathione + H2O = a 2-hydroxy carboxylate + glutathione + H(+). It participates in secondary metabolite metabolism; methylglyoxal degradation; (R)-lactate from methylglyoxal: step 2/2. In terms of biological role, thiolesterase that catalyzes the hydrolysis of S-D-lactoyl-glutathione to form glutathione and D-lactic acid. The protein is Hydroxyacylglutathione hydrolase of Roseobacter denitrificans (strain ATCC 33942 / OCh 114) (Erythrobacter sp. (strain OCh 114)).